Here is a 159-residue protein sequence, read N- to C-terminus: SsrA-binding protein (159 aa).

Residues 138–153 (KREDGKDKDWSREKER) show a composition bias toward basic and acidic residues. Residues 138–159 (KREDGKDKDWSREKERLMKHKA) form a disordered region.

It belongs to the SmpB family.

It localises to the cytoplasm. Functionally, required for rescue of stalled ribosomes mediated by trans-translation. Binds to transfer-messenger RNA (tmRNA), required for stable association of tmRNA with ribosomes. tmRNA and SmpB together mimic tRNA shape, replacing the anticodon stem-loop with SmpB. tmRNA is encoded by the ssrA gene; the 2 termini fold to resemble tRNA(Ala) and it encodes a 'tag peptide', a short internal open reading frame. During trans-translation Ala-aminoacylated tmRNA acts like a tRNA, entering the A-site of stalled ribosomes, displacing the stalled mRNA. The ribosome then switches to translate the ORF on the tmRNA; the nascent peptide is terminated with the 'tag peptide' encoded by the tmRNA and targeted for degradation. The ribosome is freed to recommence translation, which seems to be the essential function of trans-translation. The sequence is that of SsrA-binding protein from Pseudoalteromonas translucida (strain TAC 125).